The sequence spans 255 residues: ParA family protein CPn_0805/CP_1066/CPj0805/CpB0834 (255 aa).

Belongs to the ParA family.

The sequence is that of ParA family protein CPn_0805/CP_1066/CPj0805/CpB0834 from Chlamydia pneumoniae (Chlamydophila pneumoniae).